A 956-amino-acid polypeptide reads, in one-letter code: F-box only protein 10 (956 aa).

One can recognise an F-box domain in the interval 1–48; it reads MEAGGLPLELWRMILAYLHLPDLGRCSLVCRAWYELILSLDSTRWRQL. 2 PbH1 repeats span residues 198-217 and 238-260; these read SGHVQFDNCNFENGHIQVHG and VPLCVLENCEFVGSENNSVTVEG. A disordered region spans residues 314-367; the sequence is EGSQSPTSPASSSPKPGSKAGSQEAEVGSDGERVAQTPDSSDGGLSPSGEDEDE. Low complexity-rich tracts occupy residues 316–336 and 351–361; these read SQSPTSPASSSPKPGSKAGSQ and PDSSDGGLSPS. Phosphoserine occurs at positions 321 and 326. PbH1 repeat units follow at residues 427–448, 449–470, 471–493, 494–516, 538–560, 561–583, 584–606, 607–629, 630–652, 653–675, 717–739, 740–762, 764–786, 787–809, and 832–854; these read VQGCLIRKCLFRDGKGGVFVCS, HGRAKMEGNIFRNLTYAVRCIH, NSKIIMLRNDIYRCRASGIFLRL, EGGGLIAGNNIYHNAEAGVDIRK, LGNGKGIIRNNQIFSNKEAGIYI, LYHGNPVVSGNHIFKGRAAGIAV, NENGKGLITENVIRENQWGGVDI, RRGGIPVLRSNLICFGYSDGVVV, GDEGKGLIEGNTIYANKGCGVWM, MSSSLPHVTSNHVSYNGLYGVAV, RPITIALVESNSINHNGASGLYV, QSSEALHVITNVIHANGDRGITV, QSSQPTRVANNSISCNRQSGVKV, EAQCKVELRGNGIYDNRGHGIIT, and LPRSDTKVIKNRIHSFRAYGIAV.

As to quaternary structure, component of the SCF(FBXO10) complex consisting of CUL1, SKP1 and FBXO10. Interacts with BCL2. Interacts with PRDM1.

Its subcellular location is the cytoplasm. It functions in the pathway protein modification; protein ubiquitination. Substrate-recognition component of the SCF (SKP1-CUL1-F-box protein)-type E3 ubiquitin ligase complex. Mediates the ubiquitination and degradation of BCL2, an antiapoptotic protein, thereby playing a role in apoptosis by controlling the stability of BCL2. Targets also the receptor for advanced glycation end products RAGE for ubiquitination and subsequent lysosomal degradation. Directly controls HGAL/GCSAM ubiquitination and degradation and thereby decreases BCR signaling. This chain is F-box only protein 10 (FBXO10), found in Homo sapiens (Human).